A 251-amino-acid chain; its full sequence is Triosephosphate isomerase (251 aa).

9 to 11 (NWK) is a substrate binding site. H95 functions as the Electrophile in the catalytic mechanism. E167 serves as the catalytic Proton acceptor. Residues G173, S213, and 234–235 (GG) each bind substrate.

This sequence belongs to the triosephosphate isomerase family. As to quaternary structure, homodimer.

Its subcellular location is the cytoplasm. The enzyme catalyses D-glyceraldehyde 3-phosphate = dihydroxyacetone phosphate. The protein operates within carbohydrate biosynthesis; gluconeogenesis. It participates in carbohydrate degradation; glycolysis; D-glyceraldehyde 3-phosphate from glycerone phosphate: step 1/1. Involved in the gluconeogenesis. Catalyzes stereospecifically the conversion of dihydroxyacetone phosphate (DHAP) to D-glyceraldehyde-3-phosphate (G3P). The polypeptide is Triosephosphate isomerase (Geobacter metallireducens (strain ATCC 53774 / DSM 7210 / GS-15)).